The chain runs to 127 residues: Egg cell-secreted protein 1.4 (127 aa).

The first 25 residues, 1–25 (MASNTTFLFSTVTLLIILLNTTVSG), serve as a signal peptide directing secretion.

Belongs to the plant egg cell-secreted peptide family. As to expression, restricted to female reproductive tissues, specifically accumulating in storage vesicles of the unfertilized egg cell.

The protein localises to the cytoplasmic vesicle. It localises to the secreted. In terms of biological role, involved in the regulation of gamete interactions during the double fertilization and to prevent multiple-pollen tube attraction; mediates the redistribution of the gamete fusogen HAP2/GCS1 to the cell surface after secretion upon sperm arrival. The polypeptide is Egg cell-secreted protein 1.4 (EC1.4) (Arabidopsis thaliana (Mouse-ear cress)).